Here is a 252-residue protein sequence, read N- to C-terminus: 5'-nucleotidase SurE (252 aa).

Residues D8, D9, S39, and N91 each contribute to the a divalent metal cation site.

This sequence belongs to the SurE nucleotidase family. Requires a divalent metal cation as cofactor.

It is found in the cytoplasm. It catalyses the reaction a ribonucleoside 5'-phosphate + H2O = a ribonucleoside + phosphate. Functionally, nucleotidase that shows phosphatase activity on nucleoside 5'-monophosphates. This is 5'-nucleotidase SurE from Geobacter metallireducens (strain ATCC 53774 / DSM 7210 / GS-15).